Reading from the N-terminus, the 343-residue chain is Tetraacyldisaccharide 4'-kinase (343 aa).

Position 47–54 (47–54) interacts with ATP; it reads SVGGTGKT.

Belongs to the LpxK family.

The enzyme catalyses a lipid A disaccharide + ATP = a lipid IVA + ADP + H(+). Its pathway is glycolipid biosynthesis; lipid IV(A) biosynthesis; lipid IV(A) from (3R)-3-hydroxytetradecanoyl-[acyl-carrier-protein] and UDP-N-acetyl-alpha-D-glucosamine: step 6/6. Its function is as follows. Transfers the gamma-phosphate of ATP to the 4'-position of a tetraacyldisaccharide 1-phosphate intermediate (termed DS-1-P) to form tetraacyldisaccharide 1,4'-bis-phosphate (lipid IVA). The sequence is that of Tetraacyldisaccharide 4'-kinase from Flavobacterium psychrophilum (strain ATCC 49511 / DSM 21280 / CIP 103535 / JIP02/86).